Consider the following 251-residue polypeptide: uncharacterized protein (251 aa).

Disordered stretches follow at residues 1 to 93, 107 to 152, 169 to 188, and 224 to 251; these read MQPG…ASPG, GLRS…SRPQ, PSSI…VSLS, and LQAQ…STPS. Residues 225-234 show a composition bias toward polar residues; that stretch reads QAQNLPSSGP.

This is an uncharacterized protein from Homo sapiens (Human).